The chain runs to 30 residues: Dicynthaurin (30 aa).

At Thr30 the chain carries Threonine amide.

In terms of assembly, homodimer.

It localises to the secreted. Functionally, shows antibacterial activity against both Gram-positive and Gram-negative bacteria. Its antimicrobial activity is optimal at NaCl concentrations below 100 mM, suggesting that the antimicrobial actions of this peptide may take place intracellularly rather than extracellularly. Has no activity against the fungus C.albicans. Has modest hemolytic activity. The chain is Dicynthaurin from Halocynthia aurantium (Sea peach).